The chain runs to 283 residues: MTKLITTVKEMQHIVKAAKRSGTTIGFIPTMGALHDGHLTMVRESVSTNDITVVSVFVNPLQFGPNEDFDAYPRQIDKDLELVSEVGADIVFHPAVEDMYPGELGIDVKVGPLADVLEGAKRPGHFDGVVTVVNKLFNIVMPDYAYFGKKDAQQLAIVEQMVKDFNHAVEIIGIDIVREADGLAKSSRNVYLTEQERQEAVHLSKSLLLAQALYQDGERQSKVIIDRVTEYLESHISGRIEEVAVYSYPQLVEQHEITGRIFISLAVKFSKARLIDNIIIGAE.

Residue 31–38 participates in ATP binding; the sequence is MGALHDGH. Histidine 38 serves as the catalytic Proton donor. Glutamine 62 serves as a coordination point for (R)-pantoate. A beta-alanine-binding site is contributed by glutamine 62. Position 148-151 (148-151) interacts with ATP; that stretch reads GKKD. Glutamine 154 provides a ligand contact to (R)-pantoate. ATP is bound by residues valine 177 and 185–188; that span reads KSSR.

Belongs to the pantothenate synthetase family. As to quaternary structure, homodimer.

The protein resides in the cytoplasm. The enzyme catalyses (R)-pantoate + beta-alanine + ATP = (R)-pantothenate + AMP + diphosphate + H(+). It participates in cofactor biosynthesis; (R)-pantothenate biosynthesis; (R)-pantothenate from (R)-pantoate and beta-alanine: step 1/1. Catalyzes the condensation of pantoate with beta-alanine in an ATP-dependent reaction via a pantoyl-adenylate intermediate. The chain is Pantothenate synthetase from Staphylococcus aureus (strain MSSA476).